A 347-amino-acid chain; its full sequence is D-fructose 1,6-bisphosphatase class 2/sedoheptulose 1,7-bisphosphatase (347 aa).

Mn(2+)-binding residues include D33, E57, D97, and E100. Substrate-binding positions include 100 to 102, Y131, 176 to 178, and 198 to 200; these read EGT, RKR, and DGD. E225 is a Mn(2+) binding site.

This sequence belongs to the FBPase class 2 family. In terms of assembly, homotetramer. Mn(2+) is required as a cofactor.

It carries out the reaction beta-D-fructose 1,6-bisphosphate + H2O = beta-D-fructose 6-phosphate + phosphate. It catalyses the reaction D-sedoheptulose 1,7-bisphosphate + H2O = D-sedoheptulose 7-phosphate + phosphate. It functions in the pathway carbohydrate biosynthesis; Calvin cycle. Its function is as follows. Catalyzes the hydrolysis of fructose 1,6-bisphosphate (Fru 1,6-P2) and sedoheptulose 1,7-bisphosphate (Sed 1,7-P2) to fructose 6-phosphate and sedoheptulose 7-phosphate, respectively. This Synechococcus sp. (strain JA-3-3Ab) (Cyanobacteria bacterium Yellowstone A-Prime) protein is D-fructose 1,6-bisphosphatase class 2/sedoheptulose 1,7-bisphosphatase.